The sequence spans 301 residues: Phosphoribosylaminoimidazole-succinocarboxamide synthase (301 aa).

It belongs to the SAICAR synthetase family.

It carries out the reaction 5-amino-1-(5-phospho-D-ribosyl)imidazole-4-carboxylate + L-aspartate + ATP = (2S)-2-[5-amino-1-(5-phospho-beta-D-ribosyl)imidazole-4-carboxamido]succinate + ADP + phosphate + 2 H(+). The protein operates within purine metabolism; IMP biosynthesis via de novo pathway; 5-amino-1-(5-phospho-D-ribosyl)imidazole-4-carboxamide from 5-amino-1-(5-phospho-D-ribosyl)imidazole-4-carboxylate: step 1/2. This chain is Phosphoribosylaminoimidazole-succinocarboxamide synthase, found in Mycolicibacterium vanbaalenii (strain DSM 7251 / JCM 13017 / BCRC 16820 / KCTC 9966 / NRRL B-24157 / PYR-1) (Mycobacterium vanbaalenii).